Reading from the N-terminus, the 122-residue chain is Ribosome-binding factor A (122 aa).

Belongs to the RbfA family. In terms of assembly, monomer. Binds 30S ribosomal subunits, but not 50S ribosomal subunits or 70S ribosomes.

It localises to the cytoplasm. Functionally, one of several proteins that assist in the late maturation steps of the functional core of the 30S ribosomal subunit. Associates with free 30S ribosomal subunits (but not with 30S subunits that are part of 70S ribosomes or polysomes). Required for efficient processing of 16S rRNA. May interact with the 5'-terminal helix region of 16S rRNA. The protein is Ribosome-binding factor A of Cupriavidus pinatubonensis (strain JMP 134 / LMG 1197) (Cupriavidus necator (strain JMP 134)).